A 640-amino-acid polypeptide reads, in one-letter code: Biosynthetic arginine decarboxylase (640 aa).

N6-(pyridoxal phosphate)lysine is present on Lys109. A substrate-binding site is contributed by 291 to 301; that stretch reads LDVGGGLGVDY.

The protein belongs to the Orn/Lys/Arg decarboxylase class-II family. SpeA subfamily. It depends on Mg(2+) as a cofactor. Pyridoxal 5'-phosphate serves as cofactor.

The catalysed reaction is L-arginine + H(+) = agmatine + CO2. Its pathway is amine and polyamine biosynthesis; agmatine biosynthesis; agmatine from L-arginine: step 1/1. Its function is as follows. Catalyzes the biosynthesis of agmatine from arginine. The polypeptide is Biosynthetic arginine decarboxylase (Synechococcus sp. (strain RCC307)).